The chain runs to 59 residues: Large ribosomal subunit protein uL30 (59 aa).

Belongs to the universal ribosomal protein uL30 family. In terms of assembly, part of the 50S ribosomal subunit.

This chain is Large ribosomal subunit protein uL30, found in Geobacter sulfurreducens (strain ATCC 51573 / DSM 12127 / PCA).